The primary structure comprises 250 residues: Glycerol-1-phosphate phosphohydrolase 1 (250 aa).

The active-site Nucleophile is the aspartate 18. Positions 18 and 20 each coordinate Mg(2+). The Proton donor role is filled by aspartate 20. Lysine 64 participates in a covalent cross-link: Glycyl lysine isopeptide (Lys-Gly) (interchain with G-Cter in SUMO); alternate. Lysine 64 participates in a covalent cross-link: Glycyl lysine isopeptide (Lys-Gly) (interchain with G-Cter in ubiquitin); alternate. Residue serine 90 is modified to Phosphoserine. Residue lysine 144 forms a Glycyl lysine isopeptide (Lys-Gly) (interchain with G-Cter in ubiquitin) linkage. A Mg(2+)-binding site is contributed by aspartate 179.

It belongs to the HAD-like hydrolase superfamily. DOG/GPP family. Monomer. It depends on Mg(2+) as a cofactor.

The protein localises to the cytoplasm. Its subcellular location is the nucleus. The catalysed reaction is sn-glycerol 1-phosphate + H2O = glycerol + phosphate. The enzyme catalyses sn-glycerol 3-phosphate + H2O = glycerol + phosphate. In terms of biological role, major isoform of glycerol-1-phosphate phosphohydrolase involved in glycerol biosynthesis. Plays a role in osmoadaptation and required for adaptation to anaerobic conditions. This Saccharomyces cerevisiae (strain ATCC 204508 / S288c) (Baker's yeast) protein is Glycerol-1-phosphate phosphohydrolase 1.